We begin with the raw amino-acid sequence, 435 residues long: MCDMIESQPAQKIGKMKKLRRTLSDSFSRIALKKDENAIDEICVTKMSTRNCQGIDSVIKHLDPIPEDKKVRVQRTQSSFDPFEKTSNQPTSPKFGKADSYEKLEKLGEGSYATVFKGKSKVNGKLVALKVIRLQEEEGTPFTAIREASLLKGLKHANIVLLHDIIHTKETLTLVFEYVHTDLCQYMDKHPGGLNPENVKLFLFQLLRGLSYIHQGHILHRDLKPQNLLISDTGELKLADFGLARAKSVPSHTYSNEVVTLWYRPPDVLLGSTDYSTCLDMWGVGCIFVEMIQGVAAFPGMKDIQDQLERIFLILGTPIEETWPAVHSLPHFEPERFTLYGPKNLRQAWNKLSYVNHAEDLASKLLQCFPKNRLSAQAALNHDYFSDLPPRLWELSDMSSIFTVPNVKLQPEAGESMRVFGKNNSFSKSLSNSKH.

Residues Arg-75–Ser-92 show a composition bias toward polar residues. The segment at Arg-75–Lys-97 is disordered. Positions Tyr-101–Phe-385 constitute a Protein kinase domain. ATP is bound by residues Leu-107 to Val-115 and Lys-130. Asp-222 serves as the catalytic Proton acceptor.

This sequence belongs to the protein kinase superfamily. CMGC Ser/Thr protein kinase family. CDC2/CDKX subfamily. Interacts with ccny; ccny mediates its recruitment to the plasma membrane and promotes phosphorylation of lrp6.

The protein resides in the cell membrane. The catalysed reaction is L-seryl-[protein] + ATP = O-phospho-L-seryl-[protein] + ADP + H(+). The enzyme catalyses L-threonyl-[protein] + ATP = O-phospho-L-threonyl-[protein] + ADP + H(+). Functionally, serine/threonine-protein kinase involved in the control of the eukaryotic cell cycle, whose activity is controlled by an associated cyclin. Acts as a cell-cycle regulator of Wnt signaling pathway during G2/M phase by mediating the phosphorylation of lrp6, leading to the activation of the Wnt signaling pathway. This is Cyclin-dependent kinase 14 (cdk14) from Xenopus laevis (African clawed frog).